Reading from the N-terminus, the 147-residue chain is Transthyretin (147 aa).

Residues 1-20 (MASLRLFLLCLAGLVFVSEA) form the signal peptide. At Cys-30 the chain carries Sulfocysteine. Lys-35 is an L-thyroxine binding site. Glu-62 bears the 4-carboxyglutamate mark. Ser-72 bears the Phosphoserine mark. Glu-74 is a binding site for L-thyroxine. N-linked (GlcNAc...) asparagine glycosylation is present at Asn-118. Position 137 (Ser-137) interacts with L-thyroxine.

Belongs to the transthyretin family. In terms of assembly, homotetramer. Dimer of dimers. In the homotetramer, subunits assemble around a central channel that can accommodate two ligand molecules. Interacts with RBP4. Sulfonation of the reactive cysteine Cys-30 enhances the stability of the native conformation of TTR, avoiding misassembly of the protein leading to amyloid formation. As to expression, detected in plasma (at protein level). Detected in liver.

It is found in the secreted. In terms of biological role, thyroid hormone-binding protein. Probably transports thyroxine from the bloodstream to the brain. This is Transthyretin (Ttr) from Mus musculus (Mouse).